Here is a 215-residue protein sequence, read N- to C-terminus: Cytochrome b6 (215 aa).

A helical membrane pass occupies residues 32–52; it reads IFYCLGGITLTCFLVQVATGF. Cys-35 is a heme c binding site. 2 residues coordinate heme b: His-86 and His-100. Transmembrane regions (helical) follow at residues 90–110, 116–136, and 186–206; these read ASMMVLMMILHIFRVYLTGGF, LTWVTGVILAVLTVSFGVTGY, and LHTFVLPLLTAVFMLMHFLMI. 2 residues coordinate heme b: His-187 and His-202.

It belongs to the cytochrome b family. PetB subfamily. In terms of assembly, the 4 large subunits of the cytochrome b6-f complex are cytochrome b6, subunit IV (17 kDa polypeptide, PetD), cytochrome f and the Rieske protein, while the 4 small subunits are PetG, PetL, PetM and PetN. The complex functions as a dimer. Requires heme b as cofactor. The cofactor is heme c.

It localises to the plastid. Its subcellular location is the chloroplast thylakoid membrane. Functionally, component of the cytochrome b6-f complex, which mediates electron transfer between photosystem II (PSII) and photosystem I (PSI), cyclic electron flow around PSI, and state transitions. This Physcomitrium patens (Spreading-leaved earth moss) protein is Cytochrome b6.